A 190-amino-acid polypeptide reads, in one-letter code: CASP-like protein 1U3 (190 aa).

Residues 1–24 (MNGATVQPSYKEAGPVRYHPMHDC) are Cytoplasmic-facing. A helical transmembrane segment spans residues 25–45 (LSLILRLLTLGATIAAIVAML). The Extracellular segment spans residues 46 to 70 (KSTQTVPTLLGPHTARWKDFPAFEW). The helical transmembrane segment at 71–91 (FVIGNSIVLVYAALGTLAACL) threads the bilayer. The Cytoplasmic segment spans residues 92–113 (SLFTRRGPLSYTKTAWLTFLCD). Residues 114-134 (FICSCALISAGSTALGVAWIG) form a helical membrane-spanning segment. Topologically, residues 135–158 (KHGQHSAFWNAVCPTVDRFCDYVQ) are extracellular. Residues 159 to 179 (GALIATLCGFIFQALSTVIAA) form a helical membrane-spanning segment. Over 180–190 (SALHNLATHRH) the chain is Cytoplasmic.

The protein belongs to the Casparian strip membrane proteins (CASP) family. As to quaternary structure, homodimer and heterodimers.

It is found in the cell membrane. The polypeptide is CASP-like protein 1U3 (Physcomitrium patens (Spreading-leaved earth moss)).